The primary structure comprises 338 residues: Putative ankyrin repeat protein CBU_0781 (338 aa).

Residues 1–31 are disordered; sequence MSRRETPTSTISSTPTGTRTPRRRLSRKGHP. The span at 7-19 shows a compositional bias: low complexity; it reads PTSTISSTPTGTR. Residues 20-31 show a composition bias toward basic residues; sequence TPRRRLSRKGHP. ANK repeat units follow at residues 92–124 and 125–157; these read QGDT…IVNK and LGET…IKYK. Residues 197–242 are a coiled coil; sequence SQIMASDKEIDEIIRNARNLQIIKKEKREAEERARTKKSKQITLQR. The segment at 319 to 338 is disordered; sequence KKEDTTLSRNNSLSCLSSPR. Residues 325-338 show a composition bias toward low complexity; it reads LSRNNSLSCLSSPR.

This Coxiella burnetii (strain RSA 493 / Nine Mile phase I) protein is Putative ankyrin repeat protein CBU_0781.